Consider the following 1348-residue polypeptide: MGLEAQRLPGAEEAPVRVALRVRPLLPKELLHGHQSCLRVEPERGRITLGRDRHFGFHVVLGEDTGQEAVYQACVQPLLEAFFEGFNATVFAYGQTGSGKTYTMGEASVASLHEDEQGIIPRAMAEAFKLIDENDLLDCLVHVSYLELYKEEFRDLLEVGTASRDIQLREDDRGNVVLCGVKEVDVEGLDEVLSLLEMGNAARHTGATHFNRLSSRSHTVFTVTLEQRGRTPSRLPRPAAGHLLVSKFHFVDLAGSERVLKTGSTGERLKESIQINSTLLALGNVISALGDPQRRGSHIPYRDSKITRILKDSLGGNAKTVMIACVSPSSSDFDETLNTLNYASRAQNIRNRATVNWHPEAERVPEEQAAGARGPPRHRSETRIIHRGRRVPCPAVGSAAVAAGLGAECARCRARTSAAYSLLRELQAEPGLPGAAARKVRDWLCAVEGERSTLSSASGPDSGIESAPAEDQAAQGTSGRKGDEGTQQLLTLQSQVARLEEENRDFLAALEDAMEQYKLQSDRLREQQEEMVELRLRLELAQPGWGAPGLLQGLPPGSFVPRPHTAPLGGAHTHMLGMMPSTCLPGEEVSSEQQVVSGKEVKAEVLAQADKLRSASSTTSEEEGEEEEEEEEEEEEPPRRTLYLRRNGISNWSQRAGLSPGSPPDRKGPEVCPEEPAAAIPAPQAVGSGKVPVQTRQAPAAMASEWRLAQAQQKIRELAINIRMKEELIGELVRTGKAAQALNRQHSQRIRELEQEAERVRAELCEGQRQLRELEGREPQDASERSRLQEFRKRVAAAQSQVQVLKEKKQATERLVSLSAQSETRLQELERNVQLMRRQQGQLQRRLREETEQKRRLETEMNKRQHRVKELELKHEQQQKILKIKTEEIAAFQRKRRSGSNGSVVSLEQQQKIEEQKKWLDQEMEKVLQQRRALEELGEELRKREVILAKKEALMQEKTGLESKRLRSSQALNEDIVRVSSRLEHLEKELSEKSGQLRQGSAQNQQQIRGEIDTLRQEKDSLLKQRLEIDSKLRQGSLLSPEEERTLFQLDEAIEALDAAIEYKNEAITCRQRVLRASASLLSQCEMNLMAKLSYLSSSETRALLCKYFDKVVTLREEQHQQQIAFSELEMQLEEQQRLVYWLEVALERQRLEMDRQLTLQQKEHEQNVQLLLQQGRDHLGEGLADSKRQYEARIHALEKELGRHMWINQELKQKLSAGSTAGQSQGCERRSLCLENRQCLGNEDGLHPAAPEPLWQSSLLEGVSRVWDESRDLVHAPLPLTWKRSSLCSEQGSSEESRVRETTEPPVGRVLPMGEVGLSWNFGPLPKPRWEPRRTSPGMIDVRKNPL.

The Kinesin motor domain maps to 15–349 (PVRVALRVRP…LNYASRAQNI (335 aa)). Residue 94–101 (GQTGSGKT) coordinates ATP. An interaction with DLG5 region spans residues 358 to 479 (HPEAERVPEE…EDQAAQGTSG (122 aa)). Residues 358-1211 (HPEAERVPEE…LGRHMWINQE (854 aa)) form an interaction with SMO region. 2 disordered regions span residues 451–486 (RSTL…DEGT) and 607–674 (AQAD…VCPE). The stretch at 480–542 (RKGDEGTQQL…ELRLRLELAQ (63 aa)) forms a coiled coil. Residues 620-636 (SEEEGEEEEEEEEEEEE) show a composition bias toward acidic residues. Coiled-coil stretches lie at residues 698 to 1057 (APAA…IEAL) and 1109 to 1211 (FDKV…INQE). Ser903 carries the phosphoserine modification. Disordered stretches follow at residues 1288-1314 (LCSE…VLPM) and 1328-1348 (KPRW…KNPL).

It belongs to the TRAFAC class myosin-kinesin ATPase superfamily. Kinesin family. As to quaternary structure, can form homodimers and interacts with microtubules. Interacts with GLI1 and SMO. Interacts with GLI2, GLI3 and SUFU. Interacts with NPHP1. Interacts with SMO and DLG5 (via PDZ4 or guanylate kinase-like domain). Post-translationally, polyubiquitinated by UBR3. In terms of tissue distribution, expressed in heart, lung, liver, kidney, testis, spleen and cerebellum.

Its subcellular location is the cell projection. The protein localises to the cilium. It localises to the cytoplasm. The protein resides in the cytoskeleton. It is found in the cilium basal body. Essential for hedgehog signaling regulation: acts both as a negative and a positive regulator of sonic hedgehog (Shh) and Indian hedgehog (Ihh) pathways, acting downstream of SMO, through both SUFU-dependent and -independent mechanisms. Involved in the regulation of microtubular dynamics. Required for proper organization of the ciliary tip and control of ciliary localization of SUFU-GLI2 complexes. Required for localization of GLI3 to cilia in response to Shh. Negatively regulates Shh signaling by preventing inappropriate activation of the transcriptional activator GLI2 in the absence of ligand. Positively regulates Shh signaling by preventing the processing of the transcription factor GLI3 into its repressor form. In keratinocytes, promotes the dissociation of SUFU-GLI2 complexes, GLI2 nuclear translocation and Shh signaling activation. Involved in the regulation of epidermal differentiation and chondrocyte development. The protein is Kinesin-like protein KIF7 (Kif7) of Mus musculus (Mouse).